The chain runs to 164 residues: Interleukin-10 (164 aa).

The first 18 residues, 1–18 (MPSSALLCCLIFLARVAA), serve as a signal peptide directing secretion. Disulfide bonds link cysteine 30–cysteine 126 and cysteine 80–cysteine 132. Asparagine 134 is a glycosylation site (N-linked (GlcNAc...) asparagine).

This sequence belongs to the IL-10 family. In terms of assembly, homodimer. Interacts with IL10RA and IL10RB.

The protein resides in the secreted. Major immune regulatory cytokine that acts on many cells of the immune system where it has profound anti-inflammatory functions, limiting excessive tissue disruption caused by inflammation. Mechanistically, IL10 binds to its heterotetrameric receptor comprising IL10RA and IL10RB leading to JAK1 and STAT2-mediated phosphorylation of STAT3. In turn, STAT3 translocates to the nucleus where it drives expression of anti-inflammatory mediators. Targets antigen-presenting cells (APCs) such as macrophages and monocytes and inhibits their release of pro-inflammatory cytokines including granulocyte-macrophage colony-stimulating factor /GM-CSF, granulocyte colony-stimulating factor/G-CSF, IL-1 alpha, IL-1 beta, IL-6, IL-8 and TNF-alpha. Also interferes with antigen presentation by reducing the expression of MHC-class II and co-stimulatory molecules, thereby inhibiting their ability to induce T cell activation. In addition, controls the inflammatory response of macrophages by reprogramming essential metabolic pathways including mTOR signaling. The polypeptide is Interleukin-10 (IL10) (Orcinus orca (Killer whale)).